A 210-amino-acid polypeptide reads, in one-letter code: Thymidylate kinase (210 aa).

Position 10–17 (10–17 (GPEGAGKS)) interacts with ATP.

It belongs to the thymidylate kinase family.

It carries out the reaction dTMP + ATP = dTDP + ADP. In terms of biological role, phosphorylation of dTMP to form dTDP in both de novo and salvage pathways of dTTP synthesis. The protein is Thymidylate kinase of Pseudomonas syringae pv. syringae (strain B728a).